Reading from the N-terminus, the 448-residue chain is Trigger factor (448 aa).

Residues 172-257 (GDRVTVDFVG…MKKIEWPHLP (86 aa)) form the PPIase FKBP-type domain.

The protein belongs to the FKBP-type PPIase family. Tig subfamily.

The protein resides in the cytoplasm. The catalysed reaction is [protein]-peptidylproline (omega=180) = [protein]-peptidylproline (omega=0). Involved in protein export. Acts as a chaperone by maintaining the newly synthesized protein in an open conformation. Functions as a peptidyl-prolyl cis-trans isomerase. This chain is Trigger factor, found in Paraburkholderia phymatum (strain DSM 17167 / CIP 108236 / LMG 21445 / STM815) (Burkholderia phymatum).